The sequence spans 405 residues: Peroxisome biogenesis factor 3 (405 aa).

Over 1 to 26 (MENFQFEDLSPNKVSKVYQDLKKFGS) the chain is Cytoplasmic. A helical transmembrane segment spans residues 27-49 (FLYNHKMGVFLVSFSSGVAYLYH). Over 50–124 (NITQSHKRKQ…EKLKLTDQLK (75 aa)) the chain is Peroxisomal. The chain crosses the membrane as a helical span at residues 125–144 (VSIITKLFSVLYIIPMVTIF). Topologically, residues 145-405 (NRLQINLIGK…NDLDFNKVQF (261 aa)) are cytoplasmic.

Belongs to the peroxin-3 family.

It is found in the peroxisome membrane. In terms of biological role, involved in peroxisome biosynthesis. The polypeptide is Peroxisome biogenesis factor 3 (pex3) (Dictyostelium discoideum (Social amoeba)).